Reading from the N-terminus, the 511-residue chain is Probable pectinesterase/pectinesterase inhibitor 17 (511 aa).

A signal peptide spans 1–23 (MMAFRAYIINFVILCILVASTVS). Residues 24 to 171 (GYNQKDVKAW…SNLLCNTLAI (148 aa)) form a pectinesterase inhibitor 17 region. Asparagine 112 and asparagine 160 each carry an N-linked (GlcNAc...) asparagine glycan. The pectinesterase 17 stretch occupies residues 237–414 (VKQGVYSENL…LRPVLGSTKT (178 aa)). The substrate site is built by threonine 277 and glutamine 307. The active-site Proton donor; for pectinesterase activity is the aspartate 330. Cysteines 344 and 364 form a disulfide. Catalysis depends on aspartate 351, which acts as the Nucleophile; for pectinesterase activity. Residues arginine 418 and tryptophan 420 each coordinate substrate.

In the N-terminal section; belongs to the PMEI family. The protein in the C-terminal section; belongs to the pectinesterase family. As to expression, expressed in siliques.

It localises to the secreted. Its subcellular location is the cell wall. The catalysed reaction is [(1-&gt;4)-alpha-D-galacturonosyl methyl ester](n) + n H2O = [(1-&gt;4)-alpha-D-galacturonosyl](n) + n methanol + n H(+). The protein operates within glycan metabolism; pectin degradation; 2-dehydro-3-deoxy-D-gluconate from pectin: step 1/5. Acts in the modification of cell walls via demethylesterification of cell wall pectin. The protein is Probable pectinesterase/pectinesterase inhibitor 17 (PME17) of Arabidopsis thaliana (Mouse-ear cress).